The chain runs to 441 residues: ATP-dependent protease ATPase subunit HslU (441 aa).

ATP is bound by residues I18, 60 to 65, D254, E319, and R391; that span reads GVGKTE.

Belongs to the ClpX chaperone family. HslU subfamily. A double ring-shaped homohexamer of HslV is capped on each side by a ring-shaped HslU homohexamer. The assembly of the HslU/HslV complex is dependent on binding of ATP.

The protein resides in the cytoplasm. Its function is as follows. ATPase subunit of a proteasome-like degradation complex; this subunit has chaperone activity. The binding of ATP and its subsequent hydrolysis by HslU are essential for unfolding of protein substrates subsequently hydrolyzed by HslV. HslU recognizes the N-terminal part of its protein substrates and unfolds these before they are guided to HslV for hydrolysis. This chain is ATP-dependent protease ATPase subunit HslU, found in Actinobacillus succinogenes (strain ATCC 55618 / DSM 22257 / CCUG 43843 / 130Z).